The chain runs to 349 residues: 4-hydroxy-3-methylbut-2-en-1-yl diphosphate synthase (flavodoxin) (349 aa).

Positions 264, 267, 299, and 306 each coordinate [4Fe-4S] cluster.

Belongs to the IspG family. The cofactor is [4Fe-4S] cluster.

It carries out the reaction (2E)-4-hydroxy-3-methylbut-2-enyl diphosphate + oxidized [flavodoxin] + H2O + 2 H(+) = 2-C-methyl-D-erythritol 2,4-cyclic diphosphate + reduced [flavodoxin]. Its pathway is isoprenoid biosynthesis; isopentenyl diphosphate biosynthesis via DXP pathway; isopentenyl diphosphate from 1-deoxy-D-xylulose 5-phosphate: step 5/6. Functionally, converts 2C-methyl-D-erythritol 2,4-cyclodiphosphate (ME-2,4cPP) into 1-hydroxy-2-methyl-2-(E)-butenyl 4-diphosphate. This chain is 4-hydroxy-3-methylbut-2-en-1-yl diphosphate synthase (flavodoxin), found in Clostridium tetani (strain Massachusetts / E88).